The sequence spans 453 residues: Ribulose bisphosphate carboxylase large chain (453 aa).

Positions 1 to 2 are excised as a propeptide; that stretch reads MS. Pro3 carries the post-translational modification N-acetylproline. Lys14 carries the N6,N6,N6-trimethyllysine modification. The substrate site is built by Asn123 and Thr173. Lys175 serves as the catalytic Proton acceptor. Position 177 (Lys177) interacts with substrate. Residues Lys201, Asp203, and Glu204 each contribute to the Mg(2+) site. Residue Lys201 is modified to N6-carboxylysine. Catalysis depends on His294, which acts as the Proton acceptor. Substrate contacts are provided by Arg295, His327, and Ser379.

The protein belongs to the RuBisCO large chain family. Type I subfamily. Heterohexadecamer of 8 large chains and 8 small chains; disulfide-linked. The disulfide link is formed within the large subunit homodimers. Mg(2+) is required as a cofactor. The disulfide bond which can form in the large chain dimeric partners within the hexadecamer appears to be associated with oxidative stress and protein turnover.

Its subcellular location is the plastid. It is found in the chloroplast. It catalyses the reaction 2 (2R)-3-phosphoglycerate + 2 H(+) = D-ribulose 1,5-bisphosphate + CO2 + H2O. The enzyme catalyses D-ribulose 1,5-bisphosphate + O2 = 2-phosphoglycolate + (2R)-3-phosphoglycerate + 2 H(+). Functionally, ruBisCO catalyzes two reactions: the carboxylation of D-ribulose 1,5-bisphosphate, the primary event in carbon dioxide fixation, as well as the oxidative fragmentation of the pentose substrate in the photorespiration process. Both reactions occur simultaneously and in competition at the same active site. The polypeptide is Ribulose bisphosphate carboxylase large chain (Cruciata glabra (Slender crosswort)).